The following is a 482-amino-acid chain: Ribosomal protein S6 kinase beta-2 (482 aa).

The tract at residues 1–26 (MAAVFDLDLETEEGSEGEGEPELSPA) is disordered. Residues 7-21 (LDLETEEGSEGEGEP) show a composition bias toward acidic residues. Residue S15 is modified to Phosphoserine. The Protein kinase domain occupies 67 to 328 (FELLRVLGKG…AADVQRHPFF (262 aa)). ATP contacts are provided by residues 73-81 (LGKGGYGKV) and K99. The active-site Proton acceptor is the D194. Residues 329 to 399 (RHMNWDDLLA…VAPSVLDSIK (71 aa)) form the AGC-kinase C-terminal domain. A disordered region spans residues 407–482 (KLRSPRRLNS…SKRGRGRPGR (76 aa)). S417 and S423 each carry phosphoserine. Positions 437 to 466 (PSLPEPTELPLPPLLPPPPPSTTAPLPIRP) are enriched in pro residues. The short motif at 471-477 (KKSKRGR) is the Nuclear localization signal element. The span at 471-482 (KKSKRGRGRPGR) shows a compositional bias: basic residues. S473 is subject to Phosphoserine; by PKC.

It belongs to the protein kinase superfamily. AGC Ser/Thr protein kinase family. S6 kinase subfamily. In terms of processing, phosphorylated and activated by MTOR. Phosphorylation by PKC within the NLS in response to mitogenic stimuli causes cytoplasmic retention.

It localises to the cytoplasm. The protein localises to the nucleus. The enzyme catalyses L-seryl-[protein] + ATP = O-phospho-L-seryl-[protein] + ADP + H(+). It carries out the reaction L-threonyl-[protein] + ATP = O-phospho-L-threonyl-[protein] + ADP + H(+). In terms of biological role, phosphorylates specifically ribosomal protein S6. Seems to act downstream of mTOR signaling in response to growth factors and nutrients to promote cell proliferation, cell growth and cell cycle progression in an alternative pathway regulated by MEAK7. This chain is Ribosomal protein S6 kinase beta-2 (RPS6KB2), found in Homo sapiens (Human).